The chain runs to 386 residues: GTPase Obg (386 aa).

The region spanning 1–159 is the Obg domain; it reads MKFVDEASIL…RELLLELMLL (159 aa). Positions 127-147 are disordered; it reads NTRFKSSVNRTPRQKTNGTPG. A compositionally biased stretch (polar residues) spans 129–145; sequence RFKSSVNRTPRQKTNGT. The OBG-type G domain maps to 160-333; that stretch reads ADVGMLGMPN…LCWDVMTFII (174 aa). Residues 166–173, 191–195, 213–216, 283–286, and 314–316 each bind GTP; these read GMPNAGKS, FTTLV, DIPG, NKID, and SAA. Serine 173 and threonine 193 together coordinate Mg(2+).

It belongs to the TRAFAC class OBG-HflX-like GTPase superfamily. OBG GTPase family. In terms of assembly, monomer. It depends on Mg(2+) as a cofactor.

Its subcellular location is the cytoplasm. Functionally, an essential GTPase which binds GTP, GDP and possibly (p)ppGpp with moderate affinity, with high nucleotide exchange rates and a fairly low GTP hydrolysis rate. Plays a role in control of the cell cycle, stress response, ribosome biogenesis and in those bacteria that undergo differentiation, in morphogenesis control. The protein is GTPase Obg of Escherichia coli (strain UTI89 / UPEC).